Reading from the N-terminus, the 446-residue chain is Na(+)-translocating NADH-quinone reductase subunit A (446 aa).

Belongs to the NqrA family. As to quaternary structure, composed of six subunits; NqrA, NqrB, NqrC, NqrD, NqrE and NqrF.

The catalysed reaction is a ubiquinone + n Na(+)(in) + NADH + H(+) = a ubiquinol + n Na(+)(out) + NAD(+). NQR complex catalyzes the reduction of ubiquinone-1 to ubiquinol by two successive reactions, coupled with the transport of Na(+) ions from the cytoplasm to the periplasm. NqrA to NqrE are probably involved in the second step, the conversion of ubisemiquinone to ubiquinol. This chain is Na(+)-translocating NADH-quinone reductase subunit A, found in Vibrio anguillarum (Listonella anguillarum).